The sequence spans 392 residues: MATMQLRRTASMSALVFPNKISTEQQSLMFVKRLLAVSVSCITYLRGIFPERAYGTRYLDDLCVKILKEDKNCPGSSQLVKWMLGCYDALQKKYLRMIILAVYTNPEDPQTISECYQFKFKYTKNGPIMDFISKNQNNKSSTTSADTKKASILLIRKIYVLMQNLGPLPNDVCLTMKLFYYDEVTPPDYQPPGFKDGDCEGVIFDGDPTYLNVGEVPTPFHTFRLKVTTEKERMENIDSAILTPKDSKIPFQKILMDKDDVEDENHNNFDIKTKMNEQNENSGTSEIKEPNLDCKEEEIMQFKKNQSSSISQCQVEQLISKTSELDVSESKTRSGKIFQCKMVNGNQQGQISKENRKRSLRQSGKTVLHILESSSQESVLKRRRVSEPNEHT.

One can recognise an HORMA domain in the interval 25–227 (QQSLMFVKRL…TPFHTFRLKV (203 aa)). 2 disordered regions span residues 271–292 (IKTK…EPNL) and 371–392 (LESS…NEHT). Residue S374 is modified to Phosphoserine. Positions 381–384 (KRRR) match the Nuclear localization signal motif.

In terms of assembly, interacts with HORMAD2. Interacts with IHO1. In terms of processing, phosphorylated at Ser-375 in a SPO11-dependent manner.

Its subcellular location is the nucleus. The protein resides in the chromosome. Its function is as follows. Plays a key role in meiotic progression. Regulates 3 different functions during meiosis: ensures that sufficient numbers of processed DNA double-strand breaks (DSBs) are available for successful homology search by increasing the steady-state numbers of single-stranded DSB ends. Promotes synaptonemal-complex formation independently of its role in homology search. Plays a key role in the male mid-pachytene checkpoint and the female meiotic prophase checkpoint: required for efficient build-up of ATR activity on unsynapsed chromosome regions, a process believed to form the basis of meiotic silencing of unsynapsed chromatin (MSUC) and meiotic prophase quality control in both sexes. This is HORMA domain-containing protein 1 (Hormad1) from Rattus norvegicus (Rat).